The chain runs to 1857 residues: Ankyrin repeat domain-containing protein 31 (1857 aa).

2 disordered regions span residues 1–30 (MENG…EDEE) and 195–215 (SEPG…DEES). Residues 195 to 207 (SEPGEEVTQTMTS) are compositionally biased toward polar residues. 3 ANK repeats span residues 475 to 504 (FGEN…NVNQ), 508 to 537 (DGWT…DVNV), and 541 to 570 (YQIT…DPLF). The span at 676 to 691 (KFGKSNLNSVKNSRTN) shows a compositional bias: polar residues. 5 disordered regions span residues 676 to 711 (KFGK…VDDR), 813 to 844 (VTTH…KGKA), 995 to 1038 (RDSS…TVVH), 1046 to 1065 (KAEK…NTDF), and 1075 to 1137 (ANSS…QNFR). A compositionally biased stretch (basic residues) spans 692–704 (VSKRKGQKNRQQK). Residues 814 to 839 (TTHQQPHTNQEQYSSPYKSLGNNSSN) are compositionally biased toward polar residues. Basic and acidic residues predominate over residues 1008 to 1019 (SLERKQDTDKNY). The segment covering 1023–1032 (GPNTSSSSRP) has biased composition (polar residues). The span at 1082–1136 (QRKEKENVRKSDAELTHNDSEAERTLKSCEEKKKNMDSETHSPCDIQEHRKDQNF) shows a compositional bias: basic and acidic residues. ANK repeat units lie at residues 1162-1191 (KGES…DVNL), 1195-1224 (AGWT…NVNC), and 1228-1257 (DGIV…NPNQ). Disordered regions lie at residues 1457 to 1479 (NSDI…AHAQ), 1540 to 1570 (GGLL…AENS), 1609 to 1640 (DPHS…AEPL), and 1663 to 1697 (AAAA…TTPR). The segment covering 1555-1570 (ASSSQPAALTPHAENS) has biased composition (polar residues). Positions 1663–1683 (AAAASHTDSTQSSLSSASAHQ) are enriched in low complexity. Positions 1687-1782 (KTVPHRNTTP…TYLGRELVKC (96 aa)) constitute an RAMA domain.

In terms of assembly, interacts with REC114; the interaction is direct. Interacts with IHO1. As to expression, present in meiotic cells (at protein level).

The protein resides in the nucleus. It is found in the chromosome. In terms of biological role, required for DNA double-strand breaks (DSBs) formation during meiotic recombination. Regulates the spatial and temporal patterns of pre-DSB recombinosome assembly and recombination activity by acting as a scaffold that anchors REC114 and other factors to specific genomic locations, thereby regulating DSB formation. Plays a key role in recombination in the pseudoautosomal regions of sex chromosomes. The protein is Ankyrin repeat domain-containing protein 31 of Mus musculus (Mouse).